Here is a 245-residue protein sequence, read N- to C-terminus: uncharacterized protein (245 aa).

A run of 4 helical transmembrane segments spans residues 10–30 (FYTL…SPWY), 94–114 (TLAF…YVHI), 134–154 (VLIG…FLII), and 196–216 (RGWI…IYCW).

It is found in the membrane. This is an uncharacterized protein from Dictyostelium discoideum (Social amoeba).